We begin with the raw amino-acid sequence, 145 residues long: Large ribosomal subunit protein uL11 (145 aa).

This sequence belongs to the universal ribosomal protein uL11 family. As to quaternary structure, part of the ribosomal stalk of the 50S ribosomal subunit. Interacts with L10 and the large rRNA to form the base of the stalk. L10 forms an elongated spine to which L12 dimers bind in a sequential fashion forming a multimeric L10(L12)X complex. One or more lysine residues are methylated.

In terms of biological role, forms part of the ribosomal stalk which helps the ribosome interact with GTP-bound translation factors. In Sulfurihydrogenibium sp. (strain YO3AOP1), this protein is Large ribosomal subunit protein uL11.